The chain runs to 720 residues: Nucleoporin NUP2 (720 aa).

A disordered region spans residues 1 to 33 (MAKRVADAQIQRETYDSNESDDDVTPSTKVASS). 2 positions are modified to phosphoserine: serine 17 and serine 20. Residues 35–50 (VMNRRKIAMPKRRMAF) are interaction with SRP1 NLS binding site 1. Disordered regions lie at residues 52–92 (PFGS…SNSR) and 136–278 (KSIE…VDNN). An FXF 1 repeat occupies 67-69 (FSF). Residues 81–92 (VDNSPTTESNSR) show a composition bias toward polar residues. Serine 137 carries the phosphoserine modification. Residues 147-159 (NDAKPAKVEDVQK) are compositionally biased toward basic and acidic residues. A Phosphoserine modification is found at serine 165. An FXFG 1 repeat occupies 189-192 (FSFG). Residues 193–202 (PKKENRKKDE) are compositionally biased toward basic and acidic residues. Residues serine 203 and serine 205 each carry the phosphoserine modification. FXF repeat units lie at residues 216–218 (FKF) and 247–249 (FSF). Residues 243–278 (NAKPFSFSSATSTTEQTKSKNPLSLTEATKTNVDNN) show a composition bias toward polar residues. FXFG repeat units follow at residues 285–288 (FTFG), 302–305 (FVFG), and 318–321 (FTFG). A compositionally biased stretch (polar residues) spans 315-324 (KSSFTFGSTT). Positions 315-604 (KSSFTFGSTT…KPINLQNGEE (290 aa)) are disordered. The span at 345–360 (SNDSNPSFSFSIPSKN) shows a compositional bias: low complexity. Phosphoserine occurs at positions 348 and 351. An FXF 4 repeat occupies 352–354 (FSF). A Phosphothreonine modification is found at threonine 361. The stretch at 369-372 (FSFG) is one FXFG 5 repeat. Residues 373-384 (VPNSSKNETSKP) show a composition bias toward polar residues. An FXFG 6 repeat occupies 386-389 (FSFG). Residues 424–435 (TEKEKESKKDSK) show a composition bias toward basic and acidic residues. 5 FXFG repeats span residues 438-441 (FSFG), 474-477 (FSFG), 493-496 (FTFG), 511-514 (FSFG), and 524-527 (FSFG). Low complexity predominate over residues 479 to 495 (NTNTTKTADTKAPTFTF). The span at 513–533 (FGTSQPNNTPSFSFGKTTANL) shows a compositional bias: polar residues. The span at 534–548 (PANSSTSPAPSIPST) shows a compositional bias: low complexity. Residues 550-552 (FKF) form an FXF 5 repeat. A compositionally biased stretch (polar residues) spans 574–584 (TEATGNESQDA). Serine 581 bears the Phosphoserine mark. The 138-residue stretch at 583–720 (DATKVDATPE…AIEDAKKEMK (138 aa)) folds into the RanBD1 domain. A Phosphothreonine modification is found at threonine 590.

In terms of assembly, component of the nuclear pore complex (NPC). NPC constitutes the exclusive means of nucleocytoplasmic transport. NPCs allow the passive diffusion of ions and small molecules and the active, nuclear transport receptor-mediated bidirectional transport of macromolecules such as proteins, RNAs, ribonucleoparticles (RNPs), and ribosomal subunits across the nuclear envelope. Due to its 8-fold rotational symmetry, all subunits are present with 8 copies or multiples thereof. Binds to the nuclear basket of the NPC through NUP60 in a (GSP1, GSP2) GTPase-GTP-dependent manner. Interacts through its FG repeats with nuclear transport factors. Interacts with KAP122.

Its subcellular location is the nucleus. The protein resides in the nuclear pore complex. It localises to the nucleus membrane. Functions as a component of the nuclear pore complex (NPC). NPC components, collectively referred to as nucleoporins (NUPs), can play the role of both NPC structural components and of docking or interaction partners for transiently associated nuclear transport factors. Active directional transport is assured by both, a Phe-Gly (FG) repeat affinity gradient for these transport factors across the NPC and a transport cofactor concentration gradient across the nuclear envelope (GSP1 and GSP2 GTPases associated predominantly with GTP in the nucleus, with GDP in the cytoplasm). As one of the FG repeat nucleoporins NUP2 is involved in interactions with and guidance of nuclear transport receptors such as SRP1-KAP95 (importin alpha and beta) through the NPC. Like the closely related NUP1 it also plays an important role in disassembling and recycling SRP1-KAP95 to the cytoplasm after nuclear import. Upon entry of the heterotrimeric SRP1-KAP95-cargo complex in the nucleus, NUP2 binds through its N-terminus to the SRP1 nuclear localization signal (NLS) binding site, thus accelerating the release of the NLS-cargo. SRP1 in turn is released from NUP2 by binding of the GSP1-GTP associated export factor CSE1. NUP2 may also have a chromatin boundary/insulator activity through indirect interaction with genomic DNA via CSE1 and blocking of heterochromatin spreading. The protein is Nucleoporin NUP2 (NUP2) of Saccharomyces cerevisiae (strain ATCC 204508 / S288c) (Baker's yeast).